The sequence spans 230 residues: Ribonuclease 3 (230 aa).

Residues 10 to 133 (DPRLLSRIGY…IIGAIYLDSS (124 aa)) enclose the RNase III domain. A Mg(2+)-binding site is contributed by Glu-46. Residue Asp-50 is part of the active site. Mg(2+) is bound by residues Asp-119 and Glu-122. The active site involves Glu-122. A DRBM domain is found at 161–230 (DPKSRLQEYL…AAEILKLLEQ (70 aa)).

This sequence belongs to the ribonuclease III family. In terms of assembly, homodimer. The cofactor is Mg(2+).

The protein resides in the cytoplasm. The enzyme catalyses Endonucleolytic cleavage to 5'-phosphomonoester.. Digests double-stranded RNA. Involved in the processing of primary rRNA transcript to yield the immediate precursors to the large and small rRNAs (23S and 16S). Processes some mRNAs, and tRNAs when they are encoded in the rRNA operon. Processes pre-crRNA and tracrRNA of type II CRISPR loci if present in the organism. The sequence is that of Ribonuclease 3 (rnc) from Acinetobacter baumannii (strain AB307-0294).